The primary structure comprises 319 residues: Methionyl-tRNA formyltransferase (319 aa).

112 to 115 (SILP) contributes to the (6S)-5,6,7,8-tetrahydrofolate binding site.

It belongs to the Fmt family.

The enzyme catalyses L-methionyl-tRNA(fMet) + (6R)-10-formyltetrahydrofolate = N-formyl-L-methionyl-tRNA(fMet) + (6S)-5,6,7,8-tetrahydrofolate + H(+). In terms of biological role, attaches a formyl group to the free amino group of methionyl-tRNA(fMet). The formyl group appears to play a dual role in the initiator identity of N-formylmethionyl-tRNA by promoting its recognition by IF2 and preventing the misappropriation of this tRNA by the elongation apparatus. This chain is Methionyl-tRNA formyltransferase, found in Shewanella denitrificans (strain OS217 / ATCC BAA-1090 / DSM 15013).